Consider the following 193-residue polypeptide: Peptidyl-tRNA hydrolase (193 aa).

Tyrosine 17 contributes to the tRNA binding site. The Proton acceptor role is filled by histidine 22. Residues phenylalanine 68, asparagine 70, and asparagine 116 each contribute to the tRNA site.

The protein belongs to the PTH family. As to quaternary structure, monomer.

It is found in the cytoplasm. The catalysed reaction is an N-acyl-L-alpha-aminoacyl-tRNA + H2O = an N-acyl-L-amino acid + a tRNA + H(+). Its function is as follows. Hydrolyzes ribosome-free peptidyl-tRNAs (with 1 or more amino acids incorporated), which drop off the ribosome during protein synthesis, or as a result of ribosome stalling. Catalyzes the release of premature peptidyl moieties from peptidyl-tRNA molecules trapped in stalled 50S ribosomal subunits, and thus maintains levels of free tRNAs and 50S ribosomes. The sequence is that of Peptidyl-tRNA hydrolase from Acinetobacter baylyi (strain ATCC 33305 / BD413 / ADP1).